The chain runs to 680 residues: Trehalase (680 aa).

Positions 1–27 (MVLHAQPPDQSTETAREAKALAGATDG) are disordered.

This sequence belongs to the glycosyl hydrolase 15 family. In terms of assembly, homomultimer. It depends on phosphate as a cofactor.

It carries out the reaction alpha,alpha-trehalose + H2O = alpha-D-glucose + beta-D-glucose. It participates in glycan degradation; trehalose degradation; D-glucose from alpha,alpha-trehalose: step 1/1. Catalyzes the hydrolysis of alpha,alpha-trehalose into two molecules of D-glucose. The polypeptide is Trehalase (Mycobacterium tuberculosis (strain ATCC 25618 / H37Rv)).